Reading from the N-terminus, the 98-residue chain is DNA-binding protein Fis (98 aa).

Positions 74 to 93 (QTRAAVMMGINRGTLRKKLK) form a DNA-binding region, H-T-H motif.

Belongs to the transcriptional regulatory Fis family. As to quaternary structure, homodimer.

Functionally, activates ribosomal RNA transcription. Plays a direct role in upstream activation of rRNA promoters. The protein is DNA-binding protein Fis of Aeromonas hydrophila subsp. hydrophila (strain ATCC 7966 / DSM 30187 / BCRC 13018 / CCUG 14551 / JCM 1027 / KCTC 2358 / NCIMB 9240 / NCTC 8049).